The sequence spans 387 residues: Eukaryotic translation initiation factor 3 subunit M (387 aa).

Residues 181–340 (LSSKVMIELL…QKVHISSTMH (160 aa)) enclose the PCI domain.

This sequence belongs to the eIF-3 subunit M family. As to quaternary structure, component of the eukaryotic translation initiation factor 3 (eIF-3) complex. The eIF-3 complex interacts with pix.

The protein localises to the cytoplasm. Its subcellular location is the golgi apparatus. Functionally, component of the eukaryotic translation initiation factor 3 (eIF-3) complex, which is involved in protein synthesis of a specialized repertoire of mRNAs and, together with other initiation factors, stimulates binding of mRNA and methionyl-tRNAi to the 40S ribosome. The eIF-3 complex specifically targets and initiates translation of a subset of mRNAs involved in cell proliferation. The polypeptide is Eukaryotic translation initiation factor 3 subunit M (Drosophila sechellia (Fruit fly)).